We begin with the raw amino-acid sequence, 218 residues long: Ras-related protein Rab-11B (218 aa).

The residue at position 2 (Gly-2) is an N-acetylglycine. GTP is bound by residues Ser-20, Gly-21, Gly-23, Lys-24, Ser-25, Asn-26, Asn-37, Leu-38, Ser-40, Ser-42, and Thr-43. Ser-25 is a binding site for Mg(2+). The short motif at 36–47 (FNLESKSTIGVE) is the Switch 1 element. The Mg(2+) site is built by Thr-43 and Asp-66. A Switch 2 motif is present at residues 67 to 86 (TAGQERYRAITSAYYRGAVG). GTP is bound by residues Gly-69, Asn-124, Lys-125, Asp-127, Ala-155, and Leu-156. The interval 183–218 (DRSAHDESPGNNVVDISVPPTTDGQKSNKLQCCQNM) is disordered. The span at 201–218 (PPTTDGQKSNKLQCCQNM) shows a compositional bias: polar residues. 2 S-geranylgeranyl cysteine lipidation sites follow: Cys-214 and Cys-215. At Cys-215 the chain carries Cysteine methyl ester. Residues 216-218 (QNM) constitute a propeptide, removed in mature form.

This sequence belongs to the small GTPase superfamily. Rab family. It depends on Mg(2+) as a cofactor.

It localises to the recycling endosome membrane. The protein resides in the cytoplasmic vesicle. Its subcellular location is the secretory vesicle. It is found in the synaptic vesicle membrane. The protein localises to the phagosome membrane. It carries out the reaction GTP + H2O = GDP + phosphate + H(+). With respect to regulation, regulated by guanine nucleotide exchange factors (GEFs) which promote the exchange of bound GDP for free GTP. Regulated by GTPase activating proteins (GAPs) which increase the GTP hydrolysis activity. Inhibited by GDP dissociation inhibitors (GDIs) which prevent Rab-GDP dissociation. Functionally, the small GTPases Rab are key regulators of intracellular membrane trafficking, from the formation of transport vesicles to their fusion with membranes. Rabs cycle between an inactive GDP-bound form and an active GTP-bound form that is able to recruit to membranes different set of downstream effectors directly responsible for vesicle formation, movement, tethering and fusion. That Rab plays a role in endocytic recycling, regulating apical recycling of several transmembrane proteins including cystic fibrosis transmembrane conductance regulator/CFTR, epithelial sodium channel/ENaC, potassium voltage-gated channel, and voltage-dependent L-type calcium channel. May also regulate constitutive and regulated secretion, like insulin granule exocytosis. Required for melanosome transport and release from melanocytes. Also regulates V-ATPase intracellular transport in response to extracellular acidosis. This is Ras-related protein Rab-11B from Diplobatis ommata (Ocellated electric ray).